Here is an 888-residue protein sequence, read N- to C-terminus: Potassium channel AKT6 (888 aa).

Residues methionine 1–glutamate 84 lie on the Cytoplasmic side of the membrane. Residues glycine 10 to aspartate 31 form a disordered region. A helical transmembrane segment spans residues threonine 85–leucine 105. Residues glutamine 106–serine 113 are Extracellular-facing. The helical transmembrane segment at isoleucine 114–alanine 134 threads the bilayer. Residues phenylalanine 135 to alanine 155 are Cytoplasmic-facing. The chain crosses the membrane as a helical span at residues serine 156–leucine 176. The Extracellular portion of the chain corresponds to histidine 177–glycine 184. Residues isoleucine 185–glutamate 205 traverse the membrane as a helical; Voltage-sensor segment. The Cytoplasmic portion of the chain corresponds to lysine 206–lysine 219. The chain crosses the membrane as a helical span at residues leucine 220–alanine 240. The Extracellular portion of the chain corresponds to histidine 241–asparagine 267. An intramembrane region (pore-forming) is located at residues threonine 268–glycine 287. At valine 288–arginine 291 the chain is on the extracellular side. Residues glutamate 292–glycine 312 form a helical membrane-spanning segment. The Cytoplasmic portion of the chain corresponds to asparagine 313–proline 888. Leucine 398–lysine 519 lines the a nucleoside 3',5'-cyclic phosphate pocket. 5 ANK repeats span residues aspartate 543 to glutamate 572, aspartate 576 to isoleucine 605, glutamate 609 to leucine 638, serine 640 to leucine 669, and asparagine 673 to tryptophan 702. Positions arginine 822 to proline 888 constitute a KHA domain.

This sequence belongs to the potassium channel family. Plant (TC 1.A.1.4) subfamily. As to quaternary structure, the potassium channel is probably composed of a homo- or heterotetrameric complex of pore-forming subunits. Predominantly expressed in flowers; especially in pollen.

The protein localises to the membrane. Its function is as follows. Highly selective inward-rectifying potassium channel that could mediate potassium uptake in the pollen membrane. Plays an important role in pollen tube development. Assuming opened or closed conformations in response to the voltage difference across the membrane, the channel is activated by hyperpolarization. May interact with the cytoskeleton or with regulatory proteins. The polypeptide is Potassium channel AKT6 (AKT6) (Arabidopsis thaliana (Mouse-ear cress)).